A 99-amino-acid chain; its full sequence is DNA/RNA-binding protein Alba 1 (99 aa).

The residue at position 17 (lysine 17) is an N6-acetyllysine.

It belongs to the histone-like Alba family. Acetylated. Acetylation at Lys-17 decreases DNA-binding affinity.

The protein localises to the cytoplasm. It is found in the chromosome. Its function is as follows. Binds double-stranded DNA tightly but without sequence specificity. Involved in DNA compaction. This Sulfurisphaera tokodaii (strain DSM 16993 / JCM 10545 / NBRC 100140 / 7) (Sulfolobus tokodaii) protein is DNA/RNA-binding protein Alba 1.